Here is a 289-residue protein sequence, read N- to C-terminus: Probable branched-chain-amino-acid aminotransferase (289 aa).

The residue at position 154 (Lys154) is an N6-(pyridoxal phosphate)lysine.

Belongs to the class-IV pyridoxal-phosphate-dependent aminotransferase family. It depends on pyridoxal 5'-phosphate as a cofactor.

It catalyses the reaction L-leucine + 2-oxoglutarate = 4-methyl-2-oxopentanoate + L-glutamate. It carries out the reaction L-isoleucine + 2-oxoglutarate = (S)-3-methyl-2-oxopentanoate + L-glutamate. The catalysed reaction is L-valine + 2-oxoglutarate = 3-methyl-2-oxobutanoate + L-glutamate. The protein operates within amino-acid biosynthesis; L-isoleucine biosynthesis; L-isoleucine from 2-oxobutanoate: step 4/4. It participates in amino-acid biosynthesis; L-leucine biosynthesis; L-leucine from 3-methyl-2-oxobutanoate: step 4/4. It functions in the pathway amino-acid biosynthesis; L-valine biosynthesis; L-valine from pyruvate: step 4/4. Acts on leucine, isoleucine and valine. The polypeptide is Probable branched-chain-amino-acid aminotransferase (ilvE) (Rickettsia bellii (strain RML369-C)).